The chain runs to 208 residues: Inner membrane-spanning protein YciB (208 aa).

The next 5 membrane-spanning stretches (helical) occupy residues 49 to 69 (APVL…ILWL), 78 to 98 (TMLW…IYFH), 105 to 125 (WKPT…ELVF), 150 to 170 (FSWV…AFNF), and 178 to 198 (FKLF…AFFL).

Belongs to the YciB family.

The protein localises to the cell inner membrane. In terms of biological role, plays a role in cell envelope biogenesis, maintenance of cell envelope integrity and membrane homeostasis. This chain is Inner membrane-spanning protein YciB, found in Polaromonas naphthalenivorans (strain CJ2).